The primary structure comprises 147 residues: Nucleoside diphosphate kinase (147 aa).

Residues Lys9, Phe57, Arg85, Thr91, Arg102, and Asn112 each coordinate ATP. At Thr91 the chain carries Phosphothreonine. The Pros-phosphohistidine intermediate role is filled by His115. A Phosphoserine modification is found at Ser122.

This sequence belongs to the NDK family. In terms of assembly, homotetramer. It depends on Mg(2+) as a cofactor.

It localises to the cytoplasm. The enzyme catalyses a 2'-deoxyribonucleoside 5'-diphosphate + ATP = a 2'-deoxyribonucleoside 5'-triphosphate + ADP. It catalyses the reaction a ribonucleoside 5'-diphosphate + ATP = a ribonucleoside 5'-triphosphate + ADP. Its function is as follows. Major role in the synthesis of nucleoside triphosphates other than ATP. The ATP gamma phosphate is transferred to the NDP beta phosphate via a ping-pong mechanism, using a phosphorylated active-site intermediate. This is Nucleoside diphosphate kinase from Halalkalibacterium halodurans (strain ATCC BAA-125 / DSM 18197 / FERM 7344 / JCM 9153 / C-125) (Bacillus halodurans).